The chain runs to 75 residues: Small ribosomal subunit protein bS18 (75 aa).

The protein belongs to the bacterial ribosomal protein bS18 family. Part of the 30S ribosomal subunit. Forms a tight heterodimer with protein bS6.

Binds as a heterodimer with protein bS6 to the central domain of the 16S rRNA, where it helps stabilize the platform of the 30S subunit. This Idiomarina loihiensis (strain ATCC BAA-735 / DSM 15497 / L2-TR) protein is Small ribosomal subunit protein bS18.